Reading from the N-terminus, the 386-residue chain is All-trans-retinol dehydrogenase [NAD(+)] ADH7 (386 aa).

Zn(2+) is bound at residue cysteine 59. Arginine 60 to histidine 64 contributes to the NAD(+) binding site. The Zn(2+) site is built by histidine 80, cysteine 110, cysteine 113, cysteine 116, cysteine 124, and cysteine 186. NAD(+) contacts are provided by residues glycine 211–glycine 216, aspartate 235, lysine 240, isoleucine 281–histidine 283, valine 304–valine 306, cysteine 329–phenylalanine 331, and arginine 381.

It belongs to the zinc-containing alcohol dehydrogenase family. Class-IV subfamily. As to quaternary structure, homodimer. Requires Zn(2+) as cofactor. In terms of tissue distribution, preferentially expressed in stomach.

The protein resides in the cytoplasm. It catalyses the reaction a primary alcohol + NAD(+) = an aldehyde + NADH + H(+). The catalysed reaction is 10-hydroxydecanoate + NAD(+) = 10-oxodecanoate + NADH + H(+). It carries out the reaction all-trans-retinol + NAD(+) = all-trans-retinal + NADH + H(+). The enzyme catalyses 9-cis-retinol + NAD(+) = 9-cis-retinal + NADH + H(+). It catalyses the reaction all-trans-3,4-didehydroretinol + NAD(+) = all-trans-3,4-didehydroretinal + NADH + H(+). The catalysed reaction is all-trans-4-hydroxyretinol + NAD(+) = all-trans-4-hydroxyretinal + NADH + H(+). It carries out the reaction all-trans-4-oxoretinol + NAD(+) = all-trans-4-oxoretinal + NADH + H(+). The enzyme catalyses 12-hydroxydodecanoate + NAD(+) = 12-oxododecanoate + NADH + H(+). It catalyses the reaction 16-hydroxyhexadecanoate + NAD(+) = 16-oxohexadecanoate + NADH + H(+). The catalysed reaction is hexan-1-ol + NAD(+) = hexanal + NADH + H(+). It carries out the reaction (E)-hex-2-en-1-ol + NAD(+) = (E)-hex-2-enal + NADH + H(+). The enzyme catalyses (E)-4-hydroxynon-2-en-1-ol + NAD(+) = (E)-4-hydroxynon-2-enal + NADH + H(+). Retinol oxidation is inhibited by the detergent Tween 80. Ethanol inhibits both all-trans-retinol and 9-cis-retinol oxidation. 13-cis-retinol is an effective competitive inhibitor of the 9-cis-retinol oxidation. All-trans-retinoic acid is a powerful inhibitor of all-trans-retinol oxidation. 13-cis-retinoic acid is a powerful inhibitor of all-trans-retinol oxidation. Cimetidine competitively inhibited ethanol oxidation. Catalyzes the NAD-dependent oxidation of all-trans-retinol, alcohol, and omega-hydroxy fatty acids and their derivatives. Oxidizes preferentially all trans-retinol, all-trans-4-hydroxyretinol, 9-cis-retinol, 2-hexenol, and long chain omega-hydroxy fatty acids such as juniperic acid. In vitro can also catalyze the NADH-dependent reduction of all-trans-retinal and aldehydes and their derivatives. Reduces preferentially all trans-retinal, all-trans-4-oxoretinal and hexanal. Catalyzes in the oxidative direction with higher efficiency. Therefore may participate in retinoid metabolism, fatty acid omega-oxidation, and elimination of cytotoxic aldehydes produced by lipid peroxidation. The chain is All-trans-retinol dehydrogenase [NAD(+)] ADH7 from Homo sapiens (Human).